We begin with the raw amino-acid sequence, 39 residues long: Cytochrome b6-f complex subunit 5 (39 aa).

The chain crosses the membrane as a helical span at residues 5–25; the sequence is LLCGIVLGLVPITLLGLFVSA.

It belongs to the PetG family. In terms of assembly, the 4 large subunits of the cytochrome b6-f complex are cytochrome b6, subunit IV (17 kDa polypeptide, PetD), cytochrome f and the Rieske protein, while the 4 small subunits are PetG, PetL, PetM and PetN. The complex functions as a dimer.

The protein resides in the cellular thylakoid membrane. Component of the cytochrome b6-f complex, which mediates electron transfer between photosystem II (PSII) and photosystem I (PSI), cyclic electron flow around PSI, and state transitions. PetG is required for either the stability or assembly of the cytochrome b6-f complex. The protein is Cytochrome b6-f complex subunit 5 of Prochlorococcus marinus subsp. pastoris (strain CCMP1986 / NIES-2087 / MED4).